The sequence spans 384 residues: Queuine tRNA-ribosyltransferase (384 aa).

The active-site Proton acceptor is Asp-92. Substrate is bound by residues 92 to 96 (DSGGF), Asp-146, Gln-190, and Gly-217. Residues 248–254 (GVGRPED) are RNA binding. The active-site Nucleophile is Asp-267. The tract at residues 272–276 (TRHAR) is RNA binding; important for wobble base 34 recognition. Cys-305, Cys-307, Cys-310, and His-337 together coordinate Zn(2+).

The protein belongs to the queuine tRNA-ribosyltransferase family. Homodimer. Within each dimer, one monomer is responsible for RNA recognition and catalysis, while the other monomer binds to the replacement base PreQ1. Zn(2+) is required as a cofactor.

It carries out the reaction 7-aminomethyl-7-carbaguanine + guanosine(34) in tRNA = 7-aminomethyl-7-carbaguanosine(34) in tRNA + guanine. The protein operates within tRNA modification; tRNA-queuosine biosynthesis. Functionally, catalyzes the base-exchange of a guanine (G) residue with the queuine precursor 7-aminomethyl-7-deazaguanine (PreQ1) at position 34 (anticodon wobble position) in tRNAs with GU(N) anticodons (tRNA-Asp, -Asn, -His and -Tyr). Catalysis occurs through a double-displacement mechanism. The nucleophile active site attacks the C1' of nucleotide 34 to detach the guanine base from the RNA, forming a covalent enzyme-RNA intermediate. The proton acceptor active site deprotonates the incoming PreQ1, allowing a nucleophilic attack on the C1' of the ribose to form the product. After dissociation, two additional enzymatic reactions on the tRNA convert PreQ1 to queuine (Q), resulting in the hypermodified nucleoside queuosine (7-(((4,5-cis-dihydroxy-2-cyclopenten-1-yl)amino)methyl)-7-deazaguanosine). The polypeptide is Queuine tRNA-ribosyltransferase (Xylella fastidiosa (strain 9a5c)).